Reading from the N-terminus, the 959-residue chain is Glycine dehydrogenase (decarboxylating) (959 aa).

Lys-707 carries the post-translational modification N6-(pyridoxal phosphate)lysine.

The protein belongs to the GcvP family. In terms of assembly, the glycine cleavage system is composed of four proteins: P, T, L and H. It depends on pyridoxal 5'-phosphate as a cofactor.

It catalyses the reaction N(6)-[(R)-lipoyl]-L-lysyl-[glycine-cleavage complex H protein] + glycine + H(+) = N(6)-[(R)-S(8)-aminomethyldihydrolipoyl]-L-lysyl-[glycine-cleavage complex H protein] + CO2. The glycine cleavage system catalyzes the degradation of glycine. The P protein binds the alpha-amino group of glycine through its pyridoxal phosphate cofactor; CO(2) is released and the remaining methylamine moiety is then transferred to the lipoamide cofactor of the H protein. In Photobacterium profundum (strain SS9), this protein is Glycine dehydrogenase (decarboxylating).